The sequence spans 440 residues: Probable exopolygalacturonase C (440 aa).

An N-terminal signal peptide occupies residues 1–21 (MLITNPALLGILASLVPLALG). 2 N-linked (GlcNAc...) asparagine glycosylation sites follow: Asn84 and Asn151. PbH1 repeat units lie at residues 188–210 (GDDI…PFNT), 217–238 (GTNI…AVNT), and 240–261 (SHNI…SIGS). An N-linked (GlcNAc...) asparagine glycan is attached at Asn219. Residue Asp231 is the Proton donor of the active site. His255 is a catalytic residue. N-linked (GlcNAc...) asparagine glycosylation occurs at Asn271. The PbH1 4 repeat unit spans residues 272 to 293 (ITNLRFEDVTVIDALYAARFKS). A glycan (N-linked (GlcNAc...) asparagine) is linked at Asn313. An intrachain disulfide couples Cys389 to Cys395. Asn434 is a glycosylation site (N-linked (GlcNAc...) asparagine).

Belongs to the glycosyl hydrolase 28 family.

The protein resides in the secreted. It catalyses the reaction [(1-&gt;4)-alpha-D-galacturonosyl](n) + H2O = alpha-D-galacturonate + [(1-&gt;4)-alpha-D-galacturonosyl](n-1). Its function is as follows. Specific in hydrolyzing the terminal glycosidic bond of polygalacturonic acid and oligogalacturonates. This Aspergillus fumigatus (strain CBS 144.89 / FGSC A1163 / CEA10) (Neosartorya fumigata) protein is Probable exopolygalacturonase C (pgxC).